The chain runs to 435 residues: Methionine aminopeptidase 2 (435 aa).

The tract at residues 57 to 77 is disordered; that stretch reads AIDGDQAAAKKKKSKKKKKKA. The segment covering 65–77 has biased composition (basic residues); the sequence is AKKKKSKKKKKKA. A substrate-binding site is contributed by histidine 188. The a divalent metal cation site is built by aspartate 208, aspartate 219, and histidine 288. Residue histidine 296 participates in substrate binding. Residues glutamate 321 and glutamate 416 each coordinate a divalent metal cation.

The protein belongs to the peptidase M24A family. Methionine aminopeptidase eukaryotic type 2 subfamily. Co(2+) is required as a cofactor. Zn(2+) serves as cofactor. It depends on Mn(2+) as a cofactor. The cofactor is Fe(2+).

It localises to the cytoplasm. It carries out the reaction Release of N-terminal amino acids, preferentially methionine, from peptides and arylamides.. In terms of biological role, cotranslationally removes the N-terminal methionine from nascent proteins. The N-terminal methionine is often cleaved when the second residue in the primary sequence is small and uncharged (Met-Ala-, Cys, Gly, Pro, Ser, Thr, or Val). This chain is Methionine aminopeptidase 2, found in Clavispora lusitaniae (strain ATCC 42720) (Yeast).